Here is a 360-residue protein sequence, read N- to C-terminus: Phosphate acyltransferase (360 aa).

Over residues 296-305 (STLRREHLDR) the composition is skewed to basic and acidic residues. Positions 296-360 (STLRREHLDR…LRTAEPPGSL (65 aa)) are disordered. A compositionally biased stretch (basic residues) spans 314–333 (PRQRRRPRRQKRRAACRPRP). Low complexity predominate over residues 334–350 (RSAAGRAPGSGVRGAAG).

Belongs to the PlsX family. In terms of assembly, homodimer. Probably interacts with PlsY.

Its subcellular location is the cytoplasm. It carries out the reaction a fatty acyl-[ACP] + phosphate = an acyl phosphate + holo-[ACP]. The protein operates within lipid metabolism; phospholipid metabolism. Catalyzes the reversible formation of acyl-phosphate (acyl-PO(4)) from acyl-[acyl-carrier-protein] (acyl-ACP). This enzyme utilizes acyl-ACP as fatty acyl donor, but not acyl-CoA. In Deinococcus radiodurans (strain ATCC 13939 / DSM 20539 / JCM 16871 / CCUG 27074 / LMG 4051 / NBRC 15346 / NCIMB 9279 / VKM B-1422 / R1), this protein is Phosphate acyltransferase.